We begin with the raw amino-acid sequence, 197 residues long: ATP-dependent Clp protease proteolytic subunit 3 (197 aa).

Ser96 functions as the Nucleophile in the catalytic mechanism. His121 is a catalytic residue.

Belongs to the peptidase S14 family. Fourteen ClpP subunits assemble into 2 heptameric rings which stack back to back to give a disk-like structure with a central cavity, resembling the structure of eukaryotic proteasomes.

It is found in the cytoplasm. The catalysed reaction is Hydrolysis of proteins to small peptides in the presence of ATP and magnesium. alpha-casein is the usual test substrate. In the absence of ATP, only oligopeptides shorter than five residues are hydrolyzed (such as succinyl-Leu-Tyr-|-NHMec, and Leu-Tyr-Leu-|-Tyr-Trp, in which cleavage of the -Tyr-|-Leu- and -Tyr-|-Trp bonds also occurs).. In terms of biological role, cleaves peptides in various proteins in a process that requires ATP hydrolysis. Has a chymotrypsin-like activity. Plays a major role in the degradation of misfolded proteins. This Prochlorococcus marinus (strain MIT 9313) protein is ATP-dependent Clp protease proteolytic subunit 3.